We begin with the raw amino-acid sequence, 431 residues long: Histidine--tRNA ligase (431 aa).

Residues 1-20 (MALQRPKGTQDHLPDGSPKL) are disordered.

It belongs to the class-II aminoacyl-tRNA synthetase family. In terms of assembly, homodimer.

It is found in the cytoplasm. The catalysed reaction is tRNA(His) + L-histidine + ATP = L-histidyl-tRNA(His) + AMP + diphosphate + H(+). The protein is Histidine--tRNA ligase of Deinococcus geothermalis (strain DSM 11300 / CIP 105573 / AG-3a).